The chain runs to 373 residues: Leucine aminopeptidase 1 (373 aa).

An N-terminal signal peptide occupies residues 1–18 (MKFISVLALGATATSVLG). Zn(2+)-binding residues include H176 and D195. N-linked (GlcNAc...) asparagine glycosylation is present at N196. Residues E234 and D261 each coordinate Zn(2+). N286 is a glycosylation site (N-linked (GlcNAc...) asparagine). Residues C310 and C314 are joined by a disulfide bond. Position 343 (H343) interacts with Zn(2+).

Belongs to the peptidase M28 family. M28E subfamily. Monomer. Zn(2+) is required as a cofactor.

Its subcellular location is the secreted. Extracellular aminopeptidase which contributes to pathogenicity. The polypeptide is Leucine aminopeptidase 1 (LAP1) (Arthroderma otae (strain ATCC MYA-4605 / CBS 113480) (Microsporum canis)).